The sequence spans 352 residues: Small ribosomal subunit biogenesis GTPase RsgA (352 aa).

Positions 1–21 (MKKNKLSKNQHRRIQAHHQYR) are enriched in basic residues. Residues 1–38 (MKKNKLSKNQHRRIQAHHQYRLHPTSLTDDKNNQLDDA) are disordered. Positions 116 to 278 (FYDGIKPMAA…LIDSPGIREF (163 aa)) constitute a CP-type G domain. Residues 164 to 167 (NKID) and 218 to 226 (GQSGVGKSS) each bind GTP. C302, C307, H309, and C315 together coordinate Zn(2+).

This sequence belongs to the TRAFAC class YlqF/YawG GTPase family. RsgA subfamily. As to quaternary structure, monomer. Associates with 30S ribosomal subunit, binds 16S rRNA. Zn(2+) serves as cofactor.

Its subcellular location is the cytoplasm. One of several proteins that assist in the late maturation steps of the functional core of the 30S ribosomal subunit. Helps release RbfA from mature subunits. May play a role in the assembly of ribosomal proteins into the subunit. Circularly permuted GTPase that catalyzes slow GTP hydrolysis, GTPase activity is stimulated by the 30S ribosomal subunit. This is Small ribosomal subunit biogenesis GTPase RsgA from Hamiltonella defensa subsp. Acyrthosiphon pisum (strain 5AT).